Reading from the N-terminus, the 407-residue chain is MKPTVWHHLRLCPHGHPDETIDDAAIAVDETGTIVWLGAFSALPHGYAHWQREDLHGAWVTPGLVDCHTHLVYGGTRADEFAQRLAGVSYEEIARQGGGIVSTVRATRAADETTLFVQAAARLQPLLAEGVSAIEIKSGYGLDLASERKMLRVARQLGERFPVSVYTTFLGAHALPPEYAGRADAYIDEVCERMLPTLADEGLVDAVDVFCERIGFSLAQTERVFEAATRRGLPVKLHAEQLSNAGGTALAARYRALSADHLEFLDEAGVEAMKAAGTVAVLLPGAYYFIRETQLPPIELLRKHGVPIALATDHNPGTSPLESLLLTLNMGCTLFRMTVPEVLQGVTRHAAAALGRADRHGALEIGRQADFAVWSVGSLAELAYWIGRPLCEQVVRGGATVFRRMNG.

Residues H68 and H70 each coordinate Fe(3+). 2 residues coordinate Zn(2+): H68 and H70. 3 residues coordinate 4-imidazolone-5-propanoate: R77, Y140, and H173. Residue Y140 participates in N-formimidoyl-L-glutamate binding. H238 serves as a coordination point for Fe(3+). Position 238 (H238) interacts with Zn(2+). Q241 serves as a coordination point for 4-imidazolone-5-propanoate. D313 contributes to the Fe(3+) binding site. D313 contributes to the Zn(2+) binding site. Positions 315 and 317 each coordinate N-formimidoyl-L-glutamate. T318 serves as a coordination point for 4-imidazolone-5-propanoate.

It belongs to the metallo-dependent hydrolases superfamily. HutI family. Requires Zn(2+) as cofactor. Fe(3+) serves as cofactor.

It localises to the cytoplasm. The enzyme catalyses 4-imidazolone-5-propanoate + H2O = N-formimidoyl-L-glutamate. It functions in the pathway amino-acid degradation; L-histidine degradation into L-glutamate; N-formimidoyl-L-glutamate from L-histidine: step 3/3. Its function is as follows. Catalyzes the hydrolytic cleavage of the carbon-nitrogen bond in imidazolone-5-propanoate to yield N-formimidoyl-L-glutamate. It is the third step in the universal histidine degradation pathway. The protein is Imidazolonepropionase of Burkholderia ambifaria (strain MC40-6).